The chain runs to 578 residues: Putative transporter B0361.11 (578 aa).

A disordered region spans residues 1–30; that stretch reads MSISRRSYEQFDEMKSENQENNSKKKSSER. 11 helical membrane-spanning segments follow: residues 51–71, 148–168, 182–202, 232–252, 263–283, 339–359, 373–393, 399–419, 426–446, 457–477, and 486–506; these read IFTY…MYIM, FGLT…SMLA, ILAF…IFLI, AWIT…TLLV, YFIV…LPES, IWLL…YFAI, AFLY…PLMM, MIVI…TVFL, LVIM…HPIW, SLCF…SPYV, and WIPF…AFML. Residues 532–550 show a composition bias toward low complexity; the sequence is AYRRSKSSSSSVSALSKTS. The segment at 532 to 561 is disordered; sequence AYRRSKSSSSSVSALSKTSVRSKKTLSSES.

It belongs to the major facilitator superfamily. Sugar transporter (TC 2.A.1.1) family.

The protein resides in the membrane. The chain is Putative transporter B0361.11 from Caenorhabditis elegans.